The following is a 179-amino-acid chain: MLTRQQKEAIVKEMTEIFKRSSLALFADFTGFTVADLTELRSRLREKYNGGARFKVVKNTLLTLSLKDAGYEGYEEFLKGPTAVLYVTDGDPVEAVKIIYNFYKEKNADLSKLKGGFLEGRKFSSEEVEKIAKLPSKEELYAMLVGRVKAPISGLVFVLSGILRNLVLVLNAVKEKKSE.

The protein belongs to the universal ribosomal protein uL10 family. Part of the ribosomal stalk of the 50S ribosomal subunit. The N-terminus interacts with L11 and the large rRNA to form the base of the stalk. The C-terminus forms an elongated spine to which L12 dimers bind in a sequential fashion forming a multimeric L10(L12)X complex.

Forms part of the ribosomal stalk, playing a central role in the interaction of the ribosome with GTP-bound translation factors. This is Large ribosomal subunit protein uL10 from Thermotoga neapolitana (strain ATCC 49049 / DSM 4359 / NBRC 107923 / NS-E).